The chain runs to 364 residues: tRNA-specific 2-thiouridylase MnmA 1 (364 aa).

ATP-binding positions include 10 to 17 (GMSGGVDS) and methionine 36. The Nucleophile role is filled by cysteine 106. Cysteines 106 and 204 form a disulfide. Glycine 130 contributes to the ATP binding site. The segment at 154 to 156 (KDQ) is interaction with tRNA. Cysteine 204 acts as the Cysteine persulfide intermediate in catalysis. Residues 310-311 (RY) are interaction with tRNA.

This sequence belongs to the MnmA/TRMU family.

It is found in the cytoplasm. It carries out the reaction S-sulfanyl-L-cysteinyl-[protein] + uridine(34) in tRNA + AH2 + ATP = 2-thiouridine(34) in tRNA + L-cysteinyl-[protein] + A + AMP + diphosphate + H(+). Catalyzes the 2-thiolation of uridine at the wobble position (U34) of tRNA, leading to the formation of s(2)U34. The polypeptide is tRNA-specific 2-thiouridylase MnmA 1 (Thermoanaerobacter sp. (strain X514)).